Reading from the N-terminus, the 455-residue chain is Ectonucleoside triphosphate diphosphohydrolase 6 (455 aa).

At 1–12 the chain is on the cytoplasmic side; sequence MRKIPNHGTLRM. The chain crosses the membrane as a helical; Signal-anchor for type II membrane protein span at residues 13–32; that stretch reads TKVAYPLGLCVGLFIYVAYI. The Lumenal segment spans residues 33–455; it reads KWHRASAAQA…SLKRQKVPAL (423 aa). A glycan (N-linked (GlcNAc...) asparagine) is linked at asparagine 192. Residue glutamate 196 is the Proton acceptor of the active site. Asparagine 256 carries an N-linked (GlcNAc...) asparagine glycan. Intrachain disulfides connect cysteine 297–cysteine 327 and cysteine 387–cysteine 401.

Belongs to the GDA1/CD39 NTPase family. Requires Ca(2+) as cofactor. The cofactor is Mg(2+). Might be cleaved at the N-terminus, retained in an intracellular membrane compartment and in addition be released into the extracellular medium. In terms of processing, N-glycosylated. Expressed in heart and brain.

It localises to the golgi apparatus membrane. Its subcellular location is the secreted. The protein localises to the cell membrane. It carries out the reaction a ribonucleoside 5'-diphosphate + H2O = a ribonucleoside 5'-phosphate + phosphate + H(+). The enzyme catalyses IDP + H2O = IMP + phosphate + H(+). It catalyses the reaction GDP + H2O = GMP + phosphate + H(+). The catalysed reaction is UDP + H2O = UMP + phosphate + H(+). Its function is as follows. Catalyzes the hydrolysis of nucleoside triphosphates and diphosphates in a calcium- or magnesium-dependent manner. Has a strong preference for nucleoside diphosphates, preferentially hydrolyzes GDP, IDP, and UDP, with slower hydrolysis of CDP, ITP, GTP, CTP, ADP, and UTP and virtually no hydrolysis of ATP. The membrane bound form might support glycosylation reactions in the Golgi apparatus and, when released from cells, might catalyze the hydrolysis of extracellular nucleotides. This Rattus norvegicus (Rat) protein is Ectonucleoside triphosphate diphosphohydrolase 6 (Entpd6).